Reading from the N-terminus, the 318-residue chain is Acetyl-coenzyme A carboxylase carboxyl transferase subunit alpha (318 aa).

The region spanning 34 to 295 (DIEDQISQLR…KQAIKKDLSE (262 aa)) is the CoA carboxyltransferase C-terminal domain.

It belongs to the AccA family. In terms of assembly, acetyl-CoA carboxylase is a heterohexamer composed of biotin carboxyl carrier protein (AccB), biotin carboxylase (AccC) and two subunits each of ACCase subunit alpha (AccA) and ACCase subunit beta (AccD).

The protein resides in the cytoplasm. It carries out the reaction N(6)-carboxybiotinyl-L-lysyl-[protein] + acetyl-CoA = N(6)-biotinyl-L-lysyl-[protein] + malonyl-CoA. It functions in the pathway lipid metabolism; malonyl-CoA biosynthesis; malonyl-CoA from acetyl-CoA: step 1/1. Its function is as follows. Component of the acetyl coenzyme A carboxylase (ACC) complex. First, biotin carboxylase catalyzes the carboxylation of biotin on its carrier protein (BCCP) and then the CO(2) group is transferred by the carboxyltransferase to acetyl-CoA to form malonyl-CoA. The polypeptide is Acetyl-coenzyme A carboxylase carboxyl transferase subunit alpha (Colwellia psychrerythraea (strain 34H / ATCC BAA-681) (Vibrio psychroerythus)).